A 528-amino-acid polypeptide reads, in one-letter code: MTTTPEHTSAVPLRVLDHNDIFRDEVYQKQFEGKREFENAAPKEEVQRVLDWTRGWEYREKNFAREALTVNPAKACQPLGAVLAALGFEGTMPLVHGSQGCVAYFRSHFARHFKEPVPAASTSMTEDAAVFGGINNLVEAMENITALYKPKHIAVSTTCMAEVIGEDLFAYIGAAREQEAITQDFPVSYAHTPCFVGSHITGYDVMLKGILEMLAKSPDADASKVAKSDKVRLNVIPGFDTYIGNHREYKRILELMGVDPLILGDHSSSLDSPADGEYDLYPGGTPLAEGALAKFSRASLVLQESTLRRTAEYIEKDWKQETVLLETPLGVKGTDAFLTAVAKVAEVEVPAELTAERGRLVDAITDSHAYVHGKRVAIAGDPDLVIALTRFVLELGMIPVHIVSTNADTTFKARMEKVLSASKFGEEATVWPEKDLWHLRSLVFTEPVDLLIGSMQLKYISREANVPLVRVGFPIFDRHHLHRFPIIGYTGGLHLLTQLVNTILDEMDRNDPDHSFELRRRSLIGAAL.

[8Fe-7S] cluster contacts are provided by cysteine 76, cysteine 101, cysteine 159, and cysteine 194.

This sequence belongs to the NifD/NifK/NifE/NifN family. As to quaternary structure, tetramer of two alpha and two beta chains. Forms complex with the iron protein (nitrogenase component 2). [8Fe-7S] cluster serves as cofactor.

The catalysed reaction is N2 + 8 reduced [2Fe-2S]-[ferredoxin] + 16 ATP + 16 H2O = H2 + 8 oxidized [2Fe-2S]-[ferredoxin] + 2 NH4(+) + 16 ADP + 16 phosphate + 6 H(+). Its function is as follows. This molybdenum-iron protein is part of the nitrogenase complex that catalyzes the key enzymatic reactions in nitrogen fixation. The sequence is that of Nitrogenase molybdenum-iron protein beta chain (nifK) from Frankia alni.